A 425-amino-acid polypeptide reads, in one-letter code: Aromatic prenyl transferase PC-22 (425 aa).

L-tryptophan is bound by residues 83 to 84 (GI) and Glu92. 9 residues coordinate substrate: Arg107, Lys198, Tyr200, Arg265, Lys267, Tyr269, Tyr345, Tyr410, and Tyr414.

It belongs to the tryptophan dimethylallyltransferase family. In terms of assembly, homodimer.

It participates in secondary metabolite biosynthesis. Functionally, aromatic prenyl transferase; part of the gene cluster that mediates the biosynthesis of the indole diterpenes penitrems. The geranylgeranyl diphosphate (GGPP) synthase penG catalyzes the first step in penitrem biosynthesis via conversion of farnesyl pyrophosphate and isopentyl pyrophosphate into geranylgeranyl pyrophosphate (GGPP). Condensation of indole-3-glycerol phosphate with GGPP by the prenyl transferase penC then forms 3-geranylgeranylindole (3-GGI). Epoxidation by the FAD-dependent monooxygenase penM leads to a epoxidized-GGI that is substrate of the terpene cyclase penB for cyclization to yield paspaline. Paspaline is subsequently converted to 13-desoxypaxilline by the cytochrome P450 monooxygenase penP, the latter being then converted to paxilline by the cytochrome P450 monooxygenase penQ. Paxilline is converted to beta-paxitriol via C-10 ketoreduction by the short-chain dehydrogenase PC-15 which can be monoprenylated at the C-20 by the indole diterpene prenyltransferase penD. A two-step elimination (acetylation and elimination) process performed by the O-acetyltransferase PC-16 and the P.simplicissimum ptmI-ortholog not yet identified in P.crustosum, leads to the production of the prenylated form of penijanthine. The FAD-linked oxidoreductase ptmO then converts the prenylated form of penijanthine into PC-M5 which is in turn transformed into PC-M4 by the aromatic dimethylallyltransferase PC-22. A series of oxidation steps involving 4 cytochrome P450 monooxygenases (PC-21, PC-05, PC-23, PC-20) and a FAD-dependent monooxygenase (PC-14) are required for the transformation of PC-M4 to penitrems A and E. Synthesis of these final products is proposed to proceed via penitrems D and C (PC-21, PC-05, PC-14) and penitrems B and F (PC-21, PC-05, PC-14, PC-23). This is Aromatic prenyl transferase PC-22 from Penicillium crustosum (Blue mold fungus).